Reading from the N-terminus, the 95-residue chain is RING finger protein Z (95 aa).

G2 carries the N-myristoyl glycine; by host lipid modification. Residues 38 to 74 form an RING-type; atypical zinc finger; that stretch reads CKSCWFANRGLIACSDHYLCLNCLTRLRSQSQFCGIC. Positions 88 to 91 match the PTAP/PSAP motif motif; sequence PSAP.

It belongs to the arenaviridae Z protein family. In terms of assembly, interacts with protein NP; this interaction probably directs the encapsidated genome to budding sites. Interacts (via RING domain) with polymerase L; this interaction inhibits viral transcription and replication, Z partially blocks the product exit tunnel for the releasing nascent RNA product. Interacts with the glycoprotein complex; this interaction plays a role in virion budding. Interacts with host eIF4E; this interaction results in eIF4E reduced affinity for its substrate, the 5'-m7 G cap structure. Interacts (via late-budding domain) with host TSG101; this interaction is essential for budding and release of viral particles. Interacts with host RPLP0; this interaction may serve to load ribosome-like particles inside the virion. Interacts with host PML; this interaction induces PML bodies redistribution in the cytoplasm upon viral infection. Myristoylation is required for the role of RING finger protein Z in assembly and budding.

It localises to the virion. Its subcellular location is the host cytoplasm. It is found in the host perinuclear region. The protein localises to the host cell membrane. Plays a crucial role in virion assembly and budding. Expressed late in the virus life cycle, it acts as an inhibitor of viral transcription and RNA synthesis by interacting with the viral polymerase L. Presumably recruits the NP encapsidated genome to cellular membranes at budding sites via direct interaction with NP. Plays critical roles in the final steps of viral release by interacting with host TSG101, a member of the vacuolar protein-sorting pathway and using other cellular host proteins involved in vesicle formation pathway. The budding of the virus progeny occurs after association of protein Z with the viral glycoprotein complex SSP-GP1-GP2 at the cell periphery, step that requires myristoylation of protein Z. Also selectively represses protein production by associating with host eIF4E. In cell-based minigenome assay, has an inhibitory effect on the ribonucleoprotein machinery (vRNP), which is responsible for the replication and transcription of the viral genome. This Pirital mammarenavirus (isolate Rat/Venezuela/VAV-488/1995) (PIRV) protein is RING finger protein Z.